Consider the following 882-residue polypeptide: Protein translocase subunit SecA (882 aa).

ATP is bound by residues Gln-79, 97 to 101 (GEGKT), and Asp-487.

This sequence belongs to the SecA family.

The protein localises to the plastid. The protein resides in the chloroplast stroma. Its subcellular location is the chloroplast thylakoid membrane. It catalyses the reaction ATP + H2O + cellular proteinSide 1 = ADP + phosphate + cellular proteinSide 2.. Functionally, has a central role in coupling the hydrolysis of ATP to the transfer of proteins across the thylakoid membrane. In Gracilaria tenuistipitata var. liui (Red alga), this protein is Protein translocase subunit SecA.